The sequence spans 985 residues: Pro-apoptotic serine protease NMA111 (985 aa).

The tract at residues 79 to 269 (VVSIHFSQVA…LPLDRVVRAL (191 aa)) is serine protease. Active-site charge relay system residues include H117, D148, and S231. PDZ domains follow at residues 287–385 (WVLK…TVGD) and 771–847 (PEEW…VRDA).

The protein belongs to the peptidase S1C family.

It localises to the nucleus. Its function is as follows. Nuclear serine protease which mediates apoptosis. The polypeptide is Pro-apoptotic serine protease NMA111 (NMA111) (Kluyveromyces lactis (strain ATCC 8585 / CBS 2359 / DSM 70799 / NBRC 1267 / NRRL Y-1140 / WM37) (Yeast)).